We begin with the raw amino-acid sequence, 180 residues long: Peptidyl-tRNA hydrolase (180 aa).

A tRNA-binding site is contributed by Tyr-15. His-20 acts as the Proton acceptor in catalysis. Residues Phe-67, Asn-69, and Asn-115 each coordinate tRNA.

Belongs to the PTH family. Monomer.

It localises to the cytoplasm. It catalyses the reaction an N-acyl-L-alpha-aminoacyl-tRNA + H2O = an N-acyl-L-amino acid + a tRNA + H(+). Hydrolyzes ribosome-free peptidyl-tRNAs (with 1 or more amino acids incorporated), which drop off the ribosome during protein synthesis, or as a result of ribosome stalling. Functionally, catalyzes the release of premature peptidyl moieties from peptidyl-tRNA molecules trapped in stalled 50S ribosomal subunits, and thus maintains levels of free tRNAs and 50S ribosomes. In Chlamydia pneumoniae (Chlamydophila pneumoniae), this protein is Peptidyl-tRNA hydrolase.